Reading from the N-terminus, the 128-residue chain is Prokineticin-2 (128 aa).

Residues M1–A26 form the signal peptide. Disulfide bonds link C33–C45, C39–C57, C44–C106, C67–C114, and C108–C124.

Belongs to the AVIT (prokineticin) family. As to expression, expressed in the SCN and among a few other discrete brain areas, including the islands of Calleja, media l preoptic area of the hypothalamus and the shell of the nucleus accumbens. Highly expressed in testis. In the SCN, expression subjected to high amplitude of circadian oscillation.

The protein localises to the secreted. May function as an output molecule from the suprachiasmatic nucleus (SCN) that transmits behavioral circadian rhythm. May also function locally within the SCN to synchronize output. Potently contracts gastrointestinal (GI) smooth muscle. The chain is Prokineticin-2 (Prok2) from Mus musculus (Mouse).